A 260-amino-acid chain; its full sequence is FAS1 domain-containing protein SELMODRAFT_448915 (260 aa).

The Cytoplasmic portion of the chain corresponds to 1–35; it reads MRRTGRSYKPLLSQLKDHHIPVHPSSRAERAMESR. The helical transmembrane segment at 36–58 threads the bilayer; sequence TLLVLLFVGVVTIVSSGLERAAA. Residues 59-198 enclose the FAS1 domain; the sequence is QDDTDDGILP…IACHGIDRVL (140 aa). Residues 59–260 are Extracellular-facing; it reads QDDTDDGILP…SSASRYPVSE (202 aa). N-linked (GlcNAc...) asparagine glycosylation is found at Asn-118, Asn-169, Asn-176, Asn-201, Asn-236, and Asn-247. Residues 210 to 260 are disordered; the sequence is PEASPPFGAEQASPAPEALPPGTRSPNNTANPSNRKSNSTRSSASRYPVSE. The span at 233–254 shows a compositional bias: polar residues; the sequence is RSPNNTANPSNRKSNSTRSSAS.

The protein resides in the membrane. This chain is FAS1 domain-containing protein SELMODRAFT_448915, found in Selaginella moellendorffii (Spikemoss).